Here is a 507-residue protein sequence, read N- to C-terminus: Putative F-box/LRR-repeat protein At4g00320 (507 aa).

In terms of domain architecture, F-box spans 12–60 (RDGISGLPDAMICHILSFLPTKVAASTTVLAKRWKPLLAFMPNLDFDES). LRR repeat units follow at residues 135–163 (RGFGSNSTFYPLPSEIFVSKTLVRLKIQF), 187–212 (YVKMDTRMLQKLLSGCHTLEELLLMN), 214–240 (IWKESSEPEPCFVSVSVRTLKILKFSR), 317–348 (ILYLTEDTLKVLGCCRETMPVFENLIHLTIRT), and 349–374 (GVHIGWKSLPHLLKNCPNLQTLVFEG).

This is Putative F-box/LRR-repeat protein At4g00320 from Arabidopsis thaliana (Mouse-ear cress).